The following is a 116-amino-acid chain: CDKN2AIP N-terminal-like protein (116 aa).

An N-acetylmethionine modification is found at methionine 1. The XRN2-binding (XTBD) domain maps to 24–116 (AEQFRSYSES…RSELMKKHQS (93 aa)).

This sequence belongs to the CARF family. As to quaternary structure, interacts with XRN2; the interaction is direct.

In Bos taurus (Bovine), this protein is CDKN2AIP N-terminal-like protein (CDKN2AIPNL).